The sequence spans 628 residues: Netrin-4 (628 aa).

Residues 1–18 form the signal peptide; the sequence is MGSCARLLLLWGCTVVAA. One can recognise a Laminin N-terminal domain in the interval 30–261; sequence CEKACNPRMG…AIYDFIVKGS (232 aa). Asparagine 56 and asparagine 163 each carry an N-linked (GlcNAc...) asparagine glycan. 12 cysteine pairs are disulfide-bonded: cysteine 262–cysteine 271, cysteine 264–cysteine 293, cysteine 295–cysteine 304, cysteine 307–cysteine 329, cysteine 332–cysteine 341, cysteine 334–cysteine 359, cysteine 362–cysteine 371, cysteine 374–cysteine 392, cysteine 395–cysteine 413, cysteine 397–cysteine 420, cysteine 422–cysteine 431, and cysteine 434–cysteine 446. Laminin EGF-like domains follow at residues 262–331, 332–394, and 395–448; these read CFCN…ECRT, CKCN…ACKP, and CSCH…GCRP. An N-linked (GlcNAc...) asparagine glycan is attached at asparagine 353. N-linked (GlcNAc...) asparagine glycosylation occurs at asparagine 483. 2 disulfides stabilise this stretch: cysteine 506–cysteine 576 and cysteine 520–cysteine 627. One can recognise an NTR domain in the interval 506–627; sequence CECKEQTLGN…KVMDILKREC (122 aa).

In terms of assembly, may form a homodimer.

The protein resides in the secreted. The protein localises to the extracellular space. It localises to the extracellular matrix. Its function is as follows. May play an important role in neural, kidney and vascular development. The chain is Netrin-4 (NTN4) from Pongo abelii (Sumatran orangutan).